We begin with the raw amino-acid sequence, 767 residues long: Granule-bound starch synthase 2, chloroplastic/amyloplastic (767 aa).

The transit peptide at 1 to 45 directs the protein to the chloroplast; that stretch reads MENSILLHSGNQFHPNLPLLALRPKKLSLIHGSSREQMWRIKRVK. Disordered stretches follow at residues 160-204 and 226-268; these read KRDL…SSQE and YMPS…EKPP. The span at 172-188 shows a compositional bias: low complexity; sequence SRSSITASSQISSTVSS. A compositionally biased stretch (basic and acidic residues) spans 230–245; it reads LRKESSASHVEQRNEN. Residues 253-262 show a composition bias toward acidic residues; sequence ANEETEDPVN. An ADP-alpha-D-glucose-binding site is contributed by K290.

The protein belongs to the glycosyltransferase 1 family. Bacterial/plant glycogen synthase subfamily.

It localises to the plastid. It is found in the chloroplast. The protein resides in the amyloplast. It catalyses the reaction [(1-&gt;4)-alpha-D-glucosyl](n) + ADP-alpha-D-glucose = [(1-&gt;4)-alpha-D-glucosyl](n+1) + ADP + H(+). It functions in the pathway glycan biosynthesis; starch biosynthesis. Its function is as follows. Accounts for only 10 to 15% of the total soluble starch synthase activity in tubers. The polypeptide is Granule-bound starch synthase 2, chloroplastic/amyloplastic (SS2) (Solanum tuberosum (Potato)).